The chain runs to 89 residues: Prostaglandin E2 receptor EP3 subtype (89 aa).

A helical transmembrane segment spans residues 1 to 18 (GVWLAVLAFALLPVLGVG). Topologically, residues 19–48 (QYTIQWPGTWCFISTGPGGNGTNSRQNWGN) are extracellular. An N-linked (GlcNAc...) asparagine glycan is attached at Asn-38. A helical membrane pass occupies residues 49 to 74 (VFFASDFAILGLSALVVTFACNLATI). Topologically, residues 75–89 (KALVSRCRAKATASQ) are cytoplasmic.

It belongs to the G-protein coupled receptor 1 family. Interacts (via C-terminus) with MKLN1.

Its subcellular location is the cell membrane. Functionally, receptor for prostaglandin E2 (PGE2). Required for normal development of fever in response to pyrinogens, including IL1B, prostaglandin E2 and bacterial lipopolysaccharide (LPS). Required for normal potentiation of platelet aggregation by prostaglandin E2, and thus plays a role in the regulation of blood coagulation. Required for increased HCO3(-) secretion in the duodenum in response to mucosal acidification, and thereby contributes to the protection of the mucosa against acid-induced ulceration. Not required for normal kidney function, normal urine volume and osmolality. This Ovis aries (Sheep) protein is Prostaglandin E2 receptor EP3 subtype (PTGER3).